The sequence spans 200 residues: HTH-type transcriptional regulator BetI (200 aa).

The HTH tetR-type domain occupies 8 to 68 (SIRKQQLIQA…AAMRHIQYQL (61 aa)). The H-T-H motif DNA-binding region spans 31 to 50 (SIALIARKAGVSNGIISHYF).

It functions in the pathway amine and polyamine biosynthesis; betaine biosynthesis via choline pathway [regulation]. In terms of biological role, repressor involved in the biosynthesis of the osmoprotectant glycine betaine. It represses transcription of the choline transporter BetT and the genes of BetAB involved in the synthesis of glycine betaine. This chain is HTH-type transcriptional regulator BetI, found in Proteus mirabilis (strain HI4320).